Here is a 107-residue protein sequence, read N- to C-terminus: Putative ATP synthase subunit f, mitochondrial (107 aa).

The protein belongs to the ATPase F chain family. In terms of assembly, F-type ATPases have 2 components, CF(1) - the catalytic core - and CF(0) - the membrane proton channel. CF(0) seems to have nine subunits: a, b, c, d, e, f, g, F6 and 8 (or A6L).

Its subcellular location is the mitochondrion membrane. In terms of biological role, mitochondrial membrane ATP synthase (F(1)F(0) ATP synthase or Complex V) produces ATP from ADP in the presence of a proton gradient across the membrane which is generated by electron transport complexes of the respiratory chain. F-type ATPases consist of two structural domains, F(1) - containing the extramembraneous catalytic core and F(0) - containing the membrane proton channel, linked together by a central stalk and a peripheral stalk. During catalysis, ATP synthesis in the catalytic domain of F(1) is coupled via a rotary mechanism of the central stalk subunits to proton translocation. Part of the complex F(0) domain. Minor subunit located with subunit a in the membrane. This Drosophila melanogaster (Fruit fly) protein is Putative ATP synthase subunit f, mitochondrial.